The sequence spans 555 residues: Dihydroxy-acid dehydratase (555 aa).

C46 contributes to the [2Fe-2S] cluster binding site. D78 lines the Mg(2+) pocket. C119 serves as a coordination point for [2Fe-2S] cluster. Positions 120 and 121 each coordinate Mg(2+). Position 121 is an N6-carboxylysine (K121). C191 lines the [2Fe-2S] cluster pocket. E442 contributes to the Mg(2+) binding site. S468 serves as the catalytic Proton acceptor.

It belongs to the IlvD/Edd family. As to quaternary structure, homodimer. It depends on [2Fe-2S] cluster as a cofactor. Requires Mg(2+) as cofactor.

It carries out the reaction (2R)-2,3-dihydroxy-3-methylbutanoate = 3-methyl-2-oxobutanoate + H2O. The enzyme catalyses (2R,3R)-2,3-dihydroxy-3-methylpentanoate = (S)-3-methyl-2-oxopentanoate + H2O. The protein operates within amino-acid biosynthesis; L-isoleucine biosynthesis; L-isoleucine from 2-oxobutanoate: step 3/4. It functions in the pathway amino-acid biosynthesis; L-valine biosynthesis; L-valine from pyruvate: step 3/4. Functionally, functions in the biosynthesis of branched-chain amino acids. Catalyzes the dehydration of (2R,3R)-2,3-dihydroxy-3-methylpentanoate (2,3-dihydroxy-3-methylvalerate) into 2-oxo-3-methylpentanoate (2-oxo-3-methylvalerate) and of (2R)-2,3-dihydroxy-3-methylbutanoate (2,3-dihydroxyisovalerate) into 2-oxo-3-methylbutanoate (2-oxoisovalerate), the penultimate precursor to L-isoleucine and L-valine, respectively. The protein is Dihydroxy-acid dehydratase of Thermus thermophilus (strain ATCC 27634 / DSM 579 / HB8).